The primary structure comprises 55 residues: Large ribosomal subunit protein bL33 (55 aa).

It belongs to the bacterial ribosomal protein bL33 family.

In Bordetella pertussis (strain Tohama I / ATCC BAA-589 / NCTC 13251), this protein is Large ribosomal subunit protein bL33.